Here is a 391-residue protein sequence, read N- to C-terminus: Casein kinase II subunit alpha (391 aa).

The tract at residues 36–41 (QDDYQL) is interaction with beta subunit. The Protein kinase domain maps to 39–324 (YQLVRKLGRG…AREAMEHPYF (286 aa)). Residues 45–53 (LGRGKYSEV) and Lys68 each bind ATP. Asp156 (proton acceptor) is an active-site residue. A phosphothreonine; by CDK1 mark is found at Thr344 and Thr360. 2 positions are modified to phosphoserine; by CDK1: Ser362 and Ser370.

It belongs to the protein kinase superfamily. Ser/Thr protein kinase family. CK2 subfamily. In terms of assembly, heterotetramer composed of two catalytic subunits (alpha chain and/or alpha' chain) and two regulatory subunits (beta chains). The tetramer can exist as a combination of 2 alpha/2 beta, 2 alpha'/2 beta or 1 alpha/1 alpha'/2 beta subunits. Also part of a CK2-SPT16-SSRP1 complex composed of SSRP1, SUPT16H, CSNK2A1, CSNK2A2 and CSNK2B, which forms following UV irradiation. Interacts with RNPS1. Interacts with SNAI1. Interacts with PML. Interacts with CCAR2. Interacts with HIRIP3. Phosphorylated at Thr-344, Thr-360, Ser-362 and Ser-370 by CDK1 in prophase and metaphase and dephosphorylated during anaphase. Phosphorylation does not directly affect casein kinase 2 activity, but may contribute to its regulation by forming binding sites for interacting proteins and/or targeting it to different compartments.

The protein localises to the nucleus. It catalyses the reaction L-seryl-[protein] + ATP = O-phospho-L-seryl-[protein] + ADP + H(+). The enzyme catalyses L-threonyl-[protein] + ATP = O-phospho-L-threonyl-[protein] + ADP + H(+). Its activity is regulated as follows. Constitutively active protein kinase whose activity is not directly affected by phosphorylation. Seems to be regulated by level of expression and localization. In terms of biological role, catalytic subunit of a constitutively active serine/threonine-protein kinase complex that phosphorylates a large number of substrates containing acidic residues C-terminal to the phosphorylated serine or threonine. Regulates numerous cellular processes, such as cell cycle progression, apoptosis and transcription, as well as viral infection. May act as a regulatory node which integrates and coordinates numerous signals leading to an appropriate cellular response. During mitosis, functions as a component of the p53/TP53-dependent spindle assembly checkpoint (SAC) that maintains cyclin-B-CDK1 activity and G2 arrest in response to spindle damage. Also required for p53/TP53-mediated apoptosis, phosphorylating 'Ser-392' of p53/TP53 following UV irradiation. Phosphorylates a number of DNA repair proteins in response to DNA damage, such as MDC1, MRE11, RAD9A, RAD51 and HTATSF1, promoting their recruitment to DNA damage sites. Can also negatively regulate apoptosis. Phosphorylates the caspases CASP9 and CASP2 and the apoptotic regulator NOL3. Phosphorylation protects CASP9 from cleavage and activation by CASP8, and inhibits the dimerization of CASP2 and activation of CASP8. Phosphorylates YY1, protecting YY1 from cleavage by CASP7 during apoptosis. Regulates transcription by direct phosphorylation of RNA polymerases I, II, III and IV. Also phosphorylates and regulates numerous transcription factors including NF-kappa-B, STAT1, CREB1, IRF1, IRF2, ATF1, ATF4, SRF, MAX, JUN, FOS, MYC and MYB. Phosphorylates Hsp90 and its co-chaperones FKBP4 and CDC37, which is essential for chaperone function. Mediates sequential phosphorylation of FNIP1, promoting its gradual interaction with Hsp90, leading to activate both kinase and non-kinase client proteins of Hsp90. Regulates Wnt signaling by phosphorylating CTNNB1 and the transcription factor LEF1. Acts as an ectokinase that phosphorylates several extracellular proteins. Phosphorylates PML at 'Ser-565' and primes it for ubiquitin-mediated degradation. Plays an important role in the circadian clock function by phosphorylating BMAL1 at 'Ser-90' which is pivotal for its interaction with CLOCK and which controls CLOCK nuclear entry. Phosphorylates FMR1, promoting FMR1-dependent formation of a membraneless compartment. May phosphorylate histone H2A on 'Ser-1'. This Rattus norvegicus (Rat) protein is Casein kinase II subunit alpha (Csnk2a1).